Consider the following 187-residue polypeptide: MNETQIQRETRQVVEDVLEKTNLKQGALFVLGLSSSEVLGGQIGKESSQEIGELIVETILGILGSRGIHLAVQGCEHVNRALVVERQVAEQFGLEIVSVHPTLHAGGSGQLAAFKFMQDPVEVEFIKAHAGLDIGDTAIGMHVKHVQVPIRPILREIGHAHVTALASRPKLIGGARAHYPQDAIRKT.

It belongs to the UPF0340 family.

The protein is UPF0340 protein SPJ_0612 of Streptococcus pneumoniae (strain JJA).